Here is a 299-residue protein sequence, read N- to C-terminus: Protease HtpX homolog (299 aa).

A run of 2 helical transmembrane segments spans residues 14–34 (WLLL…VGNL) and 39–59 (GFGG…TMIF). H143 provides a ligand contact to Zn(2+). E144 is an active-site residue. Zn(2+) is bound at residue H147. 2 helical membrane-spanning segments follow: residues 153 to 173 (IRIS…AGMA) and 198 to 218 (IVFL…ATLV). E227 contributes to the Zn(2+) binding site.

Belongs to the peptidase M48B family. It depends on Zn(2+) as a cofactor.

The protein resides in the cell membrane. In Streptococcus thermophilus (strain ATCC BAA-250 / LMG 18311), this protein is Protease HtpX homolog.